The chain runs to 162 residues: F protein (162 aa).

The tract at residues 1 to 23 (MSTNPKPQRKKPNVTPTVAHRTS) is disordered. Positions 14–23 (VTPTVAHRTS) are enriched in polar residues.

The protein localises to the host cytoplasm. Its subcellular location is the host perinuclear region. Contributes to the RIGI-mediated inhibition of type I interferon production. The protein is F protein of Homo sapiens (Human).